Consider the following 459-residue polypeptide: tRNA modification GTPase MnmE (459 aa).

Residues arginine 23, glutamate 88, and arginine 127 each coordinate (6S)-5-formyl-5,6,7,8-tetrahydrofolate. The 159-residue stretch at 223 to 381 (GLNTVIVGKP…FKEVIKELFF (159 aa)) folds into the TrmE-type G domain. Asparagine 233 contacts K(+). Residues 233-238 (NVGKSS), 252-258 (TDVPGTT), and 277-280 (DTAG) contribute to the GTP site. Residue serine 237 participates in Mg(2+) binding. Threonine 252, valine 254, and threonine 257 together coordinate K(+). Threonine 258 is a Mg(2+) binding site. Residue lysine 459 participates in (6S)-5-formyl-5,6,7,8-tetrahydrofolate binding.

It belongs to the TRAFAC class TrmE-Era-EngA-EngB-Septin-like GTPase superfamily. TrmE GTPase family. Homodimer. Heterotetramer of two MnmE and two MnmG subunits. Requires K(+) as cofactor.

It is found in the cytoplasm. Exhibits a very high intrinsic GTPase hydrolysis rate. Involved in the addition of a carboxymethylaminomethyl (cmnm) group at the wobble position (U34) of certain tRNAs, forming tRNA-cmnm(5)s(2)U34. The chain is tRNA modification GTPase MnmE from Clostridium novyi (strain NT).